We begin with the raw amino-acid sequence, 126 residues long: Holo-[acyl-carrier-protein] synthase (126 aa).

The Mg(2+) site is built by aspartate 9 and glutamate 58.

Belongs to the P-Pant transferase superfamily. AcpS family. Requires Mg(2+) as cofactor.

The protein resides in the cytoplasm. The enzyme catalyses apo-[ACP] + CoA = holo-[ACP] + adenosine 3',5'-bisphosphate + H(+). Transfers the 4'-phosphopantetheine moiety from coenzyme A to a Ser of acyl-carrier-protein. The polypeptide is Holo-[acyl-carrier-protein] synthase (Escherichia coli O17:K52:H18 (strain UMN026 / ExPEC)).